The chain runs to 215 residues: T-complex protein 10A homolog 1 (215 aa).

Residues 1–25 (MLAGQLEARDPKEGTHPEDPCPGAG) form a disordered region. Residues 7-19 (EARDPKEGTHPED) are compositionally biased toward basic and acidic residues. A coiled-coil region spans residues 69-110 (ADVHGKLRSHIDALREQNMELREKLRALQLQRWKARKKSAAS). Residues 75–96 (LRSHIDALREQNMELREKLRAL) are leucine-zipper. The span at 150–163 (ATLLGQRSSSNNSA) shows a compositional bias: polar residues. The interval 150–215 (ATLLGQRSSS…TPCAERRGGV (66 aa)) is disordered.

The protein belongs to the TCP10 family. Self-associates (via leucine zipper). Interacts (via leucine zipper) with ZIPK/DAPK3 (via leucine zipper). Interacts with MAD4. Expressed in liver and testis. Expressed in the seminiferous tubules (at protein level).

It is found in the nucleus. Its function is as follows. May be involved in transcriptional regulation. Has in vitro transcription inhibition activity. Acts as a tumor suppressor in hepatocellular carcinoma (HCC) cells. The protein is T-complex protein 10A homolog 1 (TCP10L) of Homo sapiens (Human).